The primary structure comprises 167 residues: Biogenesis of lysosome-related organelles complex 1 subunit 6 (167 aa).

The span at 1–11 shows a compositional bias: polar residues; the sequence is MLKSSNINSVL. The tract at residues 1–38 is disordered; sequence MLKSSNINSVLNELPNDPARDSTAQSSHNGKPKQDAET. Residues 102–160 adopt a coiled-coil conformation; that stretch reads ARLNDMMSDVKRYKDKLTKIKKEMQGVYQRTKELKKRAANVAACKQRDYQRKLERLQHE.

Belongs to the BLOC1S6 family. As to quaternary structure, component of the biogenesis of lysosome-related organelles complex-1 (BLOC-1) composed of Blos1, Blos2, Blos3, Blos4, Dysb, Muted, Pldn and Snapin. Interacts with Blos1, Blos4 and Dysb.

The protein localises to the synapse. It is found in the cytoplasm. It localises to the cytoskeleton. The protein resides in the myofibril. Its subcellular location is the sarcomere. The protein localises to the z line. Functionally, component of the biogenesis of lysosome-related organelles complex-1 (BLOC-1) involved in pigment granule biogenesis and membrane trafficking in synapses. In response to high synaptic activity at neuromuscular junctions, plays a key role in promoting efficient synaptic vesicle recycling and re-formation through early endosomes. The sequence is that of Biogenesis of lysosome-related organelles complex 1 subunit 6 from Drosophila melanogaster (Fruit fly).